Reading from the N-terminus, the 241-residue chain is Mitochondrial inner membrane protease ATP23 (241 aa).

His-141 serves as a coordination point for a divalent metal cation. Glu-142 is a catalytic residue. His-145 contacts a divalent metal cation.

Belongs to the peptidase M76 family.

The protein localises to the mitochondrion inner membrane. Has a dual role in the assembly of mitochondrial ATPase. Acts as a protease that removes N-terminal residues of mitochondrial ATPase CF(0) subunit 6 at the intermembrane space side. Also involved in the correct assembly of the membrane-embedded ATPase CF(0) particle, probably mediating association of subunit 6 with the subunit 9 ring. This is Mitochondrial inner membrane protease ATP23 (ATP23) from Lodderomyces elongisporus (strain ATCC 11503 / CBS 2605 / JCM 1781 / NBRC 1676 / NRRL YB-4239) (Yeast).